Consider the following 449-residue polypeptide: Allantoinase (449 aa).

Zn(2+)-binding residues include His-61, His-63, Lys-148, His-184, His-240, and Asp-313. Position 148 is an N6-carboxylysine (Lys-148).

Belongs to the metallo-dependent hydrolases superfamily. Allantoinase family. In terms of assembly, homotetramer. The cofactor is Zn(2+). In terms of processing, carboxylation allows a single lysine to coordinate two zinc ions.

The enzyme catalyses (S)-allantoin + H2O = allantoate + H(+). The protein operates within nitrogen metabolism; (S)-allantoin degradation; allantoate from (S)-allantoin: step 1/1. In terms of biological role, catalyzes the conversion of allantoin (5-ureidohydantoin) to allantoic acid by hydrolytic cleavage of the five-member hydantoin ring. In Desulfitobacterium hafniense (strain DSM 10664 / DCB-2), this protein is Allantoinase.